Reading from the N-terminus, the 459-residue chain is Arginine biosynthesis bifunctional protein ArgJ, mitochondrial (459 aa).

Residues T187, K216, T227, E314, N454, and T459 each coordinate substrate. T227 serves as the catalytic Nucleophile.

Belongs to the ArgJ family. Heterodimer of an alpha and a beta chain. In terms of processing, the alpha and beta chains are autoproteolytically processed from a single precursor protein within the mitochondrion.

The protein localises to the mitochondrion matrix. It catalyses the reaction N(2)-acetyl-L-ornithine + L-glutamate = N-acetyl-L-glutamate + L-ornithine. The enzyme catalyses L-glutamate + acetyl-CoA = N-acetyl-L-glutamate + CoA + H(+). It functions in the pathway amino-acid biosynthesis; L-arginine biosynthesis; L-ornithine and N-acetyl-L-glutamate from L-glutamate and N(2)-acetyl-L-ornithine (cyclic): step 1/1. Its pathway is amino-acid biosynthesis; L-arginine biosynthesis; N(2)-acetyl-L-ornithine from L-glutamate: step 1/4. Catalyzes two activities which are involved in the cyclic version of arginine biosynthesis: the synthesis of acetylglutamate from glutamate and acetyl-CoA, and of ornithine by transacetylation between acetylornithine and glutamate. The sequence is that of Arginine biosynthesis bifunctional protein ArgJ, mitochondrial from Uncinocarpus reesii (strain UAMH 1704).